A 255-amino-acid chain; its full sequence is Imidazole glycerol phosphate synthase subunit HisF (255 aa).

Residues D13 and D132 contribute to the active site.

It belongs to the HisA/HisF family. Heterodimer of HisH and HisF.

It is found in the cytoplasm. The catalysed reaction is 5-[(5-phospho-1-deoxy-D-ribulos-1-ylimino)methylamino]-1-(5-phospho-beta-D-ribosyl)imidazole-4-carboxamide + L-glutamine = D-erythro-1-(imidazol-4-yl)glycerol 3-phosphate + 5-amino-1-(5-phospho-beta-D-ribosyl)imidazole-4-carboxamide + L-glutamate + H(+). Its pathway is amino-acid biosynthesis; L-histidine biosynthesis; L-histidine from 5-phospho-alpha-D-ribose 1-diphosphate: step 5/9. Functionally, IGPS catalyzes the conversion of PRFAR and glutamine to IGP, AICAR and glutamate. The HisF subunit catalyzes the cyclization activity that produces IGP and AICAR from PRFAR using the ammonia provided by the HisH subunit. In Leptospira biflexa serovar Patoc (strain Patoc 1 / ATCC 23582 / Paris), this protein is Imidazole glycerol phosphate synthase subunit HisF.